The following is a 352-amino-acid chain: Thymidine kinase (352 aa).

Position 32–39 (32–39 (GVYGIGKS)) interacts with ATP. The Proton acceptor role is filled by Glu60. Residues Tyr78 and Gln102 each coordinate substrate. Arg192 contacts ATP. Arg198 is a substrate binding site.

Belongs to the herpesviridae thymidine kinase family. Homodimer.

It catalyses the reaction thymidine + ATP = dTMP + ADP + H(+). Catalyzes the transfer of the gamma-phospho group of ATP to thymidine to generate dTMP in the salvage pathway of pyrimidine synthesis. The dTMP serves as a substrate for DNA polymerase during viral DNA replication. Allows the virus to be reactivated and to grow in non-proliferative cells lacking a high concentration of phosphorylated nucleic acid precursors. This Equus caballus (Horse) protein is Thymidine kinase.